A 1465-amino-acid chain; its full sequence is Neuropathy target esterase sws (1465 aa).

The Lumenal portion of the chain corresponds to 1-34 (MDVLEMLRASASGSYNTIFSEAWCQYVSKQITAT). Residues 35-55 (MYMYCALGMMGVLFLAWFMYF) traverse the membrane as a helical segment. The Cytoplasmic segment spans residues 56–1465 (KRMARLRLRD…RSSANNETKN (1410 aa)). 174-301 (IFGHFEKPVF…IRVIQVIMIR (128 aa)) lines the a nucleoside 3',5'-cyclic phosphate pocket. 2 stretches are compositionally biased toward polar residues: residues 331-349 (STMS…RQTP) and 434-454 (QQSV…TPDG). Disordered stretches follow at residues 331–421 (STMS…TEVH) and 434–460 (QQSV…SCPP). A phosphoserine mark is found at S446 and S455. A nucleoside 3',5'-cyclic phosphate-binding positions include 484–611 (ELGL…VVRR) and 600–727 (IVLD…LSHR). In terms of domain architecture, PNPLA spans 954-1120 (LVLGGGGARG…VNNLPGHLWR (167 aa)). Residues 958–963 (GGGARG) carry the GXGXXG motif. The GXSXG signature appears at 985-989 (GVSIG). The active-site Nucleophile is the S987. D1107 functions as the Proton acceptor in the catalytic mechanism. The DGA/G motif lies at 1107 to 1109 (DGG). Phosphoserine is present on S1201. A disordered region spans residues 1371 to 1465 (LERKTDKSTQ…RSSANNETKN (95 aa)). Positions 1378-1390 (STQSSPPTSSRTS) are enriched in low complexity. A compositionally biased stretch (basic and acidic residues) spans 1392-1402 (RGKEEARHMDN). Residues 1413–1424 (TGSGATEGIHTS) show a composition bias toward polar residues. Residues 1447-1456 (VYKDEDKENR) show a composition bias toward basic and acidic residues.

This sequence belongs to the NTE family. As to quaternary structure, interacts with Pka-C3; interaction inhibits the catalytic function of Pka-C3 and the esterase activity of sws.

Its subcellular location is the endoplasmic reticulum membrane. It catalyses the reaction a 1-acyl-sn-glycero-3-phosphocholine + H2O = sn-glycerol 3-phosphocholine + a fatty acid + H(+). Functionally, phospholipase B that deacylates intracellular phosphatidylcholine (PtdCho), generating glycerophosphocholine (GroPtdCho). This deacylation occurs at both sn-2 and sn-1 positions of PtdCho. Its specific chemical modification by certain organophosphorus (OP) compounds leads to distal axonopathy. Plays a role in the signaling mechanism between neurons and glia that regulates glia wrapping during development of the adult brain. Essential for membrane lipid homeostasis and cell survival in both neurons and glia of the adult brain. The protein is Neuropathy target esterase sws of Drosophila erecta (Fruit fly).